We begin with the raw amino-acid sequence, 138 residues long: Cytochrome b5 (138 aa).

The region spanning Gly-14–His-90 is the Cytochrome b5 heme-binding domain. 2 residues coordinate heme: His-49 and His-73. Residues Ser-114 to Met-136 form a helical membrane-spanning segment.

This sequence belongs to the cytochrome b5 family.

The protein localises to the endoplasmic reticulum membrane. Its subcellular location is the microsome membrane. Its function is as follows. Cytochrome b5 is a membrane-bound hemoprotein functioning as an electron carrier for several membrane-bound oxygenases. The chain is Cytochrome b5 (CYB5A) from Gallus gallus (Chicken).